The primary structure comprises 345 residues: Protein-glutamate methylesterase/protein-glutamine glutaminase 1 (345 aa).

One can recognise a Response regulatory domain in the interval 8–123 (SVLVIDDSAH…FEAMEALRVE (116 aa)). Asp59 bears the 4-aspartylphosphate mark. The CheB-type methylesterase domain occupies 151–344 (AGEPPLVVAV…PALAALARRR (194 aa)). Active-site residues include Ser163, His190, and Asp286.

The protein belongs to the CheB family. In terms of processing, phosphorylated by CheA. Phosphorylation of the N-terminal regulatory domain activates the methylesterase activity.

Its subcellular location is the cytoplasm. The enzyme catalyses [protein]-L-glutamate 5-O-methyl ester + H2O = L-glutamyl-[protein] + methanol + H(+). It carries out the reaction L-glutaminyl-[protein] + H2O = L-glutamyl-[protein] + NH4(+). Involved in chemotaxis. Part of a chemotaxis signal transduction system that modulates chemotaxis in response to various stimuli. Catalyzes the demethylation of specific methylglutamate residues introduced into the chemoreceptors (methyl-accepting chemotaxis proteins or MCP) by CheR. Also mediates the irreversible deamidation of specific glutamine residues to glutamic acid. This chain is Protein-glutamate methylesterase/protein-glutamine glutaminase 1, found in Myxococcus xanthus (strain DK1622).